The following is a 617-amino-acid chain: Phosphatidylinositol-3,5-bisphosphate 3-phosphatase MTMR6 (617 aa).

The GRAM domain maps to 1–101 (MEHIRTTKVE…YNSLLQLSKQ (101 aa)). Residues 2–141 (EHIRTTKVEQ…AEYERMGVPN (140 aa)) form an interaction with RAB1B region. Tyrosine 108 carries the post-translational modification Phosphotyrosine. The 376-residue stretch at 124-499 (GWQLIDLAAE…FNFKFWRNMY (376 aa)) folds into the Myotubularin phosphatase domain. Residues asparagine 248, asparagine 273, and isoleucine 274 each coordinate a 1,2-diacyl-sn-glycero-3-phospho-(1D-myo-inositol-3,5-bisphosphate). Residues asparagine 248, asparagine 273, and isoleucine 274 each contribute to the a 1,2-diacyl-sn-glycero-3-phospho-(1D-myo-inositol-3-phosphate) site. The active-site Phosphocysteine intermediate is the cysteine 336. A 1,2-diacyl-sn-glycero-3-phospho-(1D-myo-inositol-3,5-bisphosphate)-binding residues include serine 337, aspartate 338, glycine 339, tryptophan 340, aspartate 341, arginine 342, lysine 378, and arginine 382. 6 residues coordinate a 1,2-diacyl-sn-glycero-3-phospho-(1D-myo-inositol-3-phosphate): serine 337, aspartate 338, glycine 339, tryptophan 340, aspartate 341, and arginine 342. Arginine 382 is a binding site for a 1,2-diacyl-sn-glycero-3-phospho-(1D-myo-inositol-3-phosphate). Phosphoserine is present on residues serine 557, serine 585, and serine 607.

Belongs to the protein-tyrosine phosphatase family. Non-receptor class myotubularin subfamily. As to quaternary structure, homodimer. Heterodimer (via C-terminus) with MTMR9 (via C-terminus). Interacts with ALKBH4. Interacts with KCNN4. Interacts (via GRAM domain) with RAB1B (in GDP-bound form); the interaction regulates MTMR6 recruitment to the endoplasmic reticulum-Golgi intermediate compartment. Isoform 1: Ubiquitously expressed including in heart, brain, spleen, lung, liver, muscle, kidney and testis (at protein level). Isoform 2: Expressed in testis (at protein level).

It localises to the cytoplasm. It is found in the endoplasmic reticulum-Golgi intermediate compartment. The protein localises to the cell projection. Its subcellular location is the ruffle membrane. The protein resides in the endoplasmic reticulum. It carries out the reaction a 1,2-diacyl-sn-glycero-3-phospho-(1D-myo-inositol-3,5-bisphosphate) + H2O = a 1,2-diacyl-sn-glycero-3-phospho-(1D-myo-inositol-5-phosphate) + phosphate. The enzyme catalyses a 1,2-diacyl-sn-glycero-3-phospho-(1D-myo-inositol-3-phosphate) + H2O = a 1,2-diacyl-sn-glycero-3-phospho-(1D-myo-inositol) + phosphate. The catalysed reaction is 1,2-dioctanoyl-sn-glycero-3-phospho-(1D-myo-inositol-3,5-bisphosphate) + H2O = 1,2-dioctanoyl-sn-glycero-3-phospho-(1D-myo-inositol-5-phosphate) + phosphate. It catalyses the reaction 1,2-dioctanoyl-sn-glycero-3-phospho-(1-D-myo-inositol-3-phosphate) + H2O = 1,2-dioctanoyl-sn-glycero-3-phospho-(1D-myo-inositol) + phosphate. With respect to regulation, allosterically activated by phosphatidylserine and/or phosphatidylinositol 4-phosphate (PtdIns(4)P), and phosphatidylinositol 5-phosphate (PtdIns(5)P). Interaction with MTMR9 increases catalytic activity towards phosphatidylinositol 3,5-bisphosphate. In terms of biological role, lipid phosphatase that specifically dephosphorylates the D-3 position of phosphatidylinositol 3-phosphate and phosphatidylinositol 3,5-bisphosphate, generating phosphatidylinositol and phosphatidylinositol 5-phosphate. Binds with high affinity to phosphatidylinositol 3,5-bisphosphate (PtdIns(3,5)P2) but also to phosphatidylinositol 3-phosphate (PtdIns(3)P), phosphatidylinositol 4-phosphate (PtdIns(4)P), and phosphatidylinositol 5-phosphate (PtdIns(5)P), phosphatidic acid and phosphatidylserine. Negatively regulates ER-Golgi protein transport. Probably in association with MTMR9, plays a role in the late stages of macropinocytosis by dephosphorylating phosphatidylinositol 3-phosphate in membrane ruffles. Acts as a negative regulator of KCNN4/KCa3.1 channel activity in CD4(+) T-cells possibly by decreasing intracellular levels of phosphatidylinositol 3-phosphate. Negatively regulates proliferation of reactivated CD4(+) T-cells. In complex with MTMR9, negatively regulates DNA damage-induced apoptosis. The formation of the MTMR6-MTMR9 complex stabilizes both MTMR6 and MTMR9 protein levels. The polypeptide is Phosphatidylinositol-3,5-bisphosphate 3-phosphatase MTMR6 (Mus musculus (Mouse)).